We begin with the raw amino-acid sequence, 491 residues long: Serine/threonine-protein kinase 33 (491 aa).

Positions 51-89 (FASQERKKERNTSRESSLKDLSIRTSNVERKPQAQWSRS) are disordered. The span at 54-82 (QERKKERNTSRESSLKDLSIRTSNVERKP) shows a compositional bias: basic and acidic residues. The region spanning 111–377 (YTFGRILGQG…AKELLDNQWL (267 aa)) is the Protein kinase domain. Residues 117–125 (LGQGSFGMV) and Lys140 contribute to the ATP site. The active-site Proton acceptor is Asp233. Residues 398 to 491 (KNNPESDEET…TTLFRGKKRL (94 aa)) are disordered. Residues 402–414 (ESDEETNTDEETE) are compositionally biased toward acidic residues. Phosphoserine is present on Ser403. Polar residues predominate over residues 415-431 (QSAVYSPSANTAKQPTN). Residues 445–457 (SSNSSSSKLLSAE) are compositionally biased toward low complexity. Residues 475-484 (AKTTLKSTTL) are compositionally biased toward polar residues.

This sequence belongs to the protein kinase superfamily. CAMK Ser/Thr protein kinase family. CaMK subfamily. In terms of assembly, homodimer. Post-translationally, autophosphorylated. In terms of tissue distribution, highly expressed in testis, particularly in cells from the spermatogenic epithelia. Present in meiotic and post meiotic sperm cells. Significant expression is detected in lung epithelia, alveolar macrophages, horizontal cells in the retina and in embryonic organs such as heart, brain and spinal cord. Also expressed in pituitary gland, kidney, pancreas, trachea and thyroid gland.

It is found in the cytoplasm. Its subcellular location is the cytoskeleton. It localises to the perinuclear region. It carries out the reaction L-seryl-[protein] + ATP = O-phospho-L-seryl-[protein] + ADP + H(+). The catalysed reaction is L-threonyl-[protein] + ATP = O-phospho-L-threonyl-[protein] + ADP + H(+). Specifically inhibited by CDD-2807 ((3-([1,1'-Biphenyl]-2-ylethynyl)-1H-indazol-5-yl)(2,6-diazaspiro[3.5]nonan-2-yl)methanone). CDD-2807 is a potential male contraceptive drug: it is not toxic, efficiently crosses the blood-testis barrier and induces a reversible contraceptive effect in male mice. In terms of biological role, serine/threonine protein kinase required for spermatid differentiation and male fertility. Promotes sperm flagella assembly during spermatogenesis by mediating phosphorylation of fibrous sheath proteins AKAP3 and AKAP4. Also phosphorylates vimentin/VIM, thereby regulating the dynamic behavior of the intermediate filament cytoskeleton. The protein is Serine/threonine-protein kinase 33 of Mus musculus (Mouse).